The following is a 417-amino-acid chain: MAEIKNYTLNFGPQHPAAHGVLRLVLELDGEVIQRADPHIGLLHRATEKLAESKTFIQSVPYMDRLDYVSMMVNEHGYVLAIEKLLGIEVPERAQYIRVLFDEITRVLNHLMWIGAHALDVGAMAVFLYAFREREDLMDVYEAVSGARMHAAYYRPGGVYRDLPDAMPQYKASKIRNEKALAKMNEARSGSVLDFIDDFFTRFPKCVDEYETLLTDNRIWKQRLVGIGVVSPERALQMGLTGPMLRGSGIAWDLRKKQPYEVYDRMDFDVPVGVNGDCYDRYLVRVEEMRQSILIAKQCIEWLRKNPGPVMTDNHKVAPPSRVGMKTNMEDLIHHFKLFTEGFHVPEGEAYAAVEHPKGEFGIYLVSDGANKPYRLKIRAPGFAHLASLDEMARGHMIADAVTIIGTQDIVFGEIDR.

This sequence belongs to the complex I 49 kDa subunit family. NDH-1 is composed of 14 different subunits. Subunits NuoB, C, D, E, F, and G constitute the peripheral sector of the complex.

The protein resides in the cell inner membrane. It catalyses the reaction a quinone + NADH + 5 H(+)(in) = a quinol + NAD(+) + 4 H(+)(out). Functionally, NDH-1 shuttles electrons from NADH, via FMN and iron-sulfur (Fe-S) centers, to quinones in the respiratory chain. The immediate electron acceptor for the enzyme in this species is believed to be ubiquinone. Couples the redox reaction to proton translocation (for every two electrons transferred, four hydrogen ions are translocated across the cytoplasmic membrane), and thus conserves the redox energy in a proton gradient. This is NADH-quinone oxidoreductase subunit D from Burkholderia orbicola (strain MC0-3).